Consider the following 805-residue polypeptide: G-type lectin S-receptor-like serine/threonine-protein kinase SD1-29 (805 aa).

The signal sequence occupies residues 1–21 (MGMVLFACLLLLIIFPTCGYA). A Bulb-type lectin domain is found at 22 to 141 (AINTSSPLSI…VSGNKLWQSF (120 aa)). The Extracellular segment spans residues 22–428 (AINTSSPLSI…SELAGSSRRK (407 aa)). N-linked (GlcNAc...) asparagine glycosylation is found at N24, N50, N85, N91, and N248. One can recognise an EGF-like domain in the interval 277-313 (PENPCDLYGRCGPYGLCVRSDPPKCECLKGFVPKSDE). 2 cysteine pairs are disulfide-bonded: C281/C293 and C287/C301. 2 N-linked (GlcNAc...) asparagine glycosylation sites follow: N319 and N378. Positions 332–418 (CQAKSSMKTQ…GEFLFIRLAS (87 aa)) constitute a PAN domain. 2 disulfide bridges follow: C371-C392 and C375-C381. The chain crosses the membrane as a helical span at residues 429–449 (IIVGTTVSLSIFLILVFAAIM). Residues 450–805 (LWRYRAKQND…EMTESMIQGR (356 aa)) lie on the Cytoplasmic side of the membrane. The region spanning 488 to 773 (FSPSNKLGQG…DLPVPKQPIF (286 aa)) is the Protein kinase domain. Residues 494 to 502 (LGQGGFGPV) and K516 contribute to the ATP site. Residues S522 and S537 each carry the phosphoserine modification. Residues 577 to 594 (CLKFELDWPKRFNIIQGI) are caM-binding. The residue at position 600 (Y600) is a Phosphotyrosine. D613 serves as the catalytic Proton acceptor. Phosphoserine occurs at positions 617 and 630. T647 carries the phosphothreonine modification. A phosphoserine mark is found at S690 and S793.

This sequence belongs to the protein kinase superfamily. Ser/Thr protein kinase family. As to quaternary structure, interacts with PUB9, PUB13, PUB14, PUB29, PUB38, PUB44 and PUB45. Interacts with PBL34, PBL35 and PBL36. Autophosphorylated at Tyr-600. Autophosphorylation at Tyr-600 is required for downstream phosphorylation of the receptor-like cytoplasmic kinase PBL34, PBL35 and PBL36, and activation of plant immunity.

It is found in the cell membrane. It catalyses the reaction L-seryl-[protein] + ATP = O-phospho-L-seryl-[protein] + ADP + H(+). The enzyme catalyses L-threonyl-[protein] + ATP = O-phospho-L-threonyl-[protein] + ADP + H(+). It carries out the reaction L-tyrosyl-[protein] + ATP = O-phospho-L-tyrosyl-[protein] + ADP + H(+). In terms of biological role, S-domain receptor protein kinase involved in lipopolysaccharide (LPS) sensing. Specifically detects LPS of Pseudomonas and Xanthomonas species. LPS are major components of the outer membrane of Gram-negative bacteria and are important microbe-associated molecular patterns (MAMPs) that trigger biphasic production of reactive oxygen species (ROS) and immune responses in plants. Seems to be only partially associated with the second LPS-triggered ROS burst. Mediates defense signaling in response to the medium-chain 3-hydroxy fatty acid 3-OH-C10:0, a pathogen-associated molecular pattern (PAMP) which induces autophosphorylation at Tyr-600. Autophosphorylation at Tyr-600 is required for downstream phosphorylation of the receptor-like cytoplasmic kinase PBL34, PBL35 and PBL36, and activation of plant immunity. Its function is as follows. (Microbial infection) Targeted by the bacterial type III effector protein tyrosine phosphatase HopAO1 from Pseudomonas syringae. HopAO1 dephosphorylates Tyr-600, which suppresses the immune response. The sequence is that of G-type lectin S-receptor-like serine/threonine-protein kinase SD1-29 from Arabidopsis thaliana (Mouse-ear cress).